A 46-amino-acid polypeptide reads, in one-letter code: GLFSKFAGKGIKNLIFKGVKHIGKEVGMDVIRTGIDVAGCKIKGEC.

In terms of tissue distribution, expressed by the skin glands.

Its subcellular location is the secreted. In terms of biological role, antimicrobial peptide active against the Gram-positive bacterium S.aureus (MIC=12.5 uM) and against the Gram-negative bacterium E.coli (MIC=6 uM). Has no antifungal activity against C.albicans. Shows hemolytic activity against human erythrocytes only at high concentrations (LC(50)=210 uM). This Odorrana grahami (Yunnanfu frog) protein is Esculentin-1GRa.